The chain runs to 375 residues: Alcohol dehydrogenase 1A (375 aa).

Gly-1 carries the N-acetylglycine modification. Residues Cys-46, His-67, Cys-97, Cys-100, Cys-103, Cys-111, and Cys-174 each coordinate Zn(2+). Residues Gly-199–Gly-204, Asp-223, Lys-228, Val-293–Leu-295, and Arg-370 contribute to the NAD(+) site.

This sequence belongs to the zinc-containing alcohol dehydrogenase family. Class-I subfamily. As to quaternary structure, multimeric (with different ratios of monomers). Zn(2+) is required as a cofactor.

It is found in the cytoplasm. The enzyme catalyses a primary alcohol + NAD(+) = an aldehyde + NADH + H(+). The catalysed reaction is a secondary alcohol + NAD(+) = a ketone + NADH + H(+). The protein is Alcohol dehydrogenase 1A of Saara hardwickii (Indian spiny-tailed lizard).